The primary structure comprises 644 residues: Exoribonuclease 2 (644 aa).

An RNB domain is found at 189 to 516 (RQDLTALNFV…NHRLLKAVIK (328 aa)). The S1 motif domain maps to 561-643 (NTRFAAEIID…ETRSIIARPA (83 aa)).

This sequence belongs to the RNR ribonuclease family. RNase II subfamily.

Its subcellular location is the cytoplasm. The enzyme catalyses Exonucleolytic cleavage in the 3'- to 5'-direction to yield nucleoside 5'-phosphates.. Its function is as follows. Involved in mRNA degradation. Hydrolyzes single-stranded polyribonucleotides processively in the 3' to 5' direction. The sequence is that of Exoribonuclease 2 from Salmonella typhi.